The primary structure comprises 1225 residues: DNA-directed RNA polymerase subunit beta' (1225 aa).

Positions 60, 62, 75, and 78 each coordinate Zn(2+). Residues Asp-450, Asp-452, and Asp-454 each contribute to the Mg(2+) site. Zn(2+) is bound by residues Cys-818, Cys-892, Cys-899, and Cys-902.

The protein belongs to the RNA polymerase beta' chain family. In terms of assembly, the RNAP catalytic core consists of 2 alpha, 1 beta, 1 beta' and 1 omega subunit. When a sigma factor is associated with the core the holoenzyme is formed, which can initiate transcription. It depends on Mg(2+) as a cofactor. The cofactor is Zn(2+).

The enzyme catalyses RNA(n) + a ribonucleoside 5'-triphosphate = RNA(n+1) + diphosphate. Its function is as follows. DNA-dependent RNA polymerase catalyzes the transcription of DNA into RNA using the four ribonucleoside triphosphates as substrates. This Streptococcus pneumoniae serotype 19F (strain G54) protein is DNA-directed RNA polymerase subunit beta'.